The following is a 1538-amino-acid chain: Phenolphthiocerol/phthiocerol polyketide synthase subunit B (1538 aa).

The 423-residue stretch at 33 to 455 folds into the Ketosynthase family 3 (KS3) domain; sequence AEPVAVVGIG…GTNAHVIIEQ (423 aa). Residues cysteine 205, histidine 340, and histidine 377 each act as for beta-ketoacyl synthase activity in the active site. The segment at 553 to 882 is acyltransferase; it reads DGSPGPGTVF…TNLYTADIAH (330 aa). The For malonyltransferase activity role is filled by serine 649. 1153–1196 serves as a coordination point for NADP(+); that stretch reads SQLVIGATGNIGPHLIRQLARMGAKTIVAMARKPGALDELTQCL. Positions 1153–1328 are beta-ketoacyl reductase; the sequence is SQLVIGATGN…TVVDWGLWKS (176 aa). One can recognise a Carrier domain in the interval 1423–1498; it reads DMLFDHVGAL…SLTDYLATVL (76 aa). Serine 1458 is modified (O-(pantetheine 4'-phosphoryl)serine).

Requires NADP(+) as cofactor. The cofactor is pantetheine 4'-phosphate.

It carries out the reaction icosanoyl-[(phenol)carboxyphthiodiolenone synthase] + 2 (S)-methylmalonyl-CoA + 3 malonyl-CoA + 5 NADPH + 10 H(+) = C32-carboxyphthiodiolenone-[(phenol)carboxyphthiodiolenone synthase] + 5 CO2 + 5 NADP(+) + 5 CoA + 2 H2O. The catalysed reaction is docosanoyl-[(phenol)carboxyphthiodiolenone synthase] + 2 (S)-methylmalonyl-CoA + 3 malonyl-CoA + 5 NADPH + 10 H(+) = C34-carboxyphthiodiolenone-[(phenol)carboxyphthiodiolenone synthase] + 5 CO2 + 5 NADP(+) + 5 CoA + 2 H2O. The enzyme catalyses 17-(4-hydroxyphenyl)heptadecanoyl-[(phenol)carboxyphthiodiolenone synthase] + 2 (S)-methylmalonyl-CoA + 3 malonyl-CoA + 5 NADPH + 10 H(+) = C35-(phenol)carboxyphthiodiolenone-[(phenol)carboxyphthiodiolenone synthase] + 5 CO2 + 5 NADP(+) + 5 CoA + 2 H2O. It catalyses the reaction 19-(4-hydroxyphenyl)nonadecanoyl-[(phenol)carboxyphthiodiolenone synthase] + 2 (S)-methylmalonyl-CoA + 3 malonyl-CoA + 5 NADPH + 10 H(+) = C37-(phenol)carboxyphthiodiolenone-[(phenol)carboxyphthiodiolenone synthase] + 5 CO2 + 5 NADP(+) + 5 CoA + 2 H2O. It participates in lipid metabolism; fatty acid biosynthesis. In terms of biological role, part of the PpsABCDE complex involved in the biosynthesis of the lipid core common to phthiocerols and phenolphthiocerols by successive additions of malonyl-CoA or methylmalonyl-CoA extender units. PpsA can accept as substrate the activated forms of either icosanoyl (C20), docosanoyl (C22) or lignoceroyl (C24) groups from FadD26, or a (4-hydroxyphenyl)-C17 or (4-hydroxyphenyl)-C19 fatty acyl from FadD29. PpsA initiates the biosynthesis and extends its substrate using a malonyl-CoA extender unit. The PpsB and PpsC proteins add the second and third malonyl-CoA extender units. PpsD adds an (R)-methylmalonyl unit and PpsE adds a second (R)-methylmalonyl unit. The incorporation of the methylmalonyl units results in formation of two branched methyl groups in the elongated product. This chain is Phenolphthiocerol/phthiocerol polyketide synthase subunit B (ppsB), found in Mycobacterium bovis (strain ATCC BAA-935 / AF2122/97).